Consider the following 179-residue polypeptide: Large ribosomal subunit protein uL5 (179 aa).

It belongs to the universal ribosomal protein uL5 family. In terms of assembly, part of the 50S ribosomal subunit; part of the 5S rRNA/L5/L18/L25 subcomplex. Contacts the 5S rRNA and the P site tRNA. Forms a bridge to the 30S subunit in the 70S ribosome.

Functionally, this is one of the proteins that bind and probably mediate the attachment of the 5S RNA into the large ribosomal subunit, where it forms part of the central protuberance. In the 70S ribosome it contacts protein S13 of the 30S subunit (bridge B1b), connecting the 2 subunits; this bridge is implicated in subunit movement. Contacts the P site tRNA; the 5S rRNA and some of its associated proteins might help stabilize positioning of ribosome-bound tRNAs. The protein is Large ribosomal subunit protein uL5 of Geobacillus sp. (strain WCH70).